Consider the following 298-residue polypeptide: MLATGATVSTAGLAQVDREKIYQWINELSSPETRENALLELSKKRESVTDLAPMLWHSCGTIAALLQEIVNIYPSINPPTLTAHQSNRVCNALALLQCVASHVETRSAFLAAHIPLFLYPFLHTVSKTRPFEYLRLTSLGVIGALVKTDEQEVINFLLTTEIIPLCLRIMESGSELSKTVATFILQKILLDDTGLAYICQTYERFSHVAMILGKMVLQLSKEPSARLLKHVVRCYLRLSDNSRAREALRQCLPDQLKDTTFAQVLKDDSTTKRWLAQLVKNLQEGQVTDPRGIPLPTQ.

This sequence belongs to the CNOT9 family. Homodimer. Component of the CCR4-NOT complex.

It localises to the nucleus. The protein resides in the cytoplasm. It is found in the P-body. Its function is as follows. Component of the CCR4-NOT complex which is one of the major cellular mRNA deadenylases and is linked to various cellular processes including bulk mRNA degradation, miRNA-mediated repression, translational repression during translational initiation and general transcription regulation. Additional complex functions may be a consequence of its influence on mRNA expression. Involved in down-regulation of MYB- and JUN-dependent transcription. Enhances ligand-dependent transcriptional activity of nuclear hormone receptors. May play a role in cell differentiation. This is CCR4-NOT transcription complex subunit 9 from Danio rerio (Zebrafish).